The sequence spans 489 residues: Ataxin-10 homolog (489 aa).

Belongs to the ataxin-10 family.

It is found in the cytoplasm. In terms of biological role, may play a role in the regulation of cytokinesis. The polypeptide is Ataxin-10 homolog (CTR86) (Debaryomyces hansenii (strain ATCC 36239 / CBS 767 / BCRC 21394 / JCM 1990 / NBRC 0083 / IGC 2968) (Yeast)).